The sequence spans 449 residues: Trigger factor (449 aa).

A PPIase FKBP-type domain is found at 162–242 (GDFVTIDMTV…VRAVREKQVP (81 aa)). Positions 428–449 (APVNLEGGSTPAAEAEPAVSEA) are disordered. Residues 438 to 449 (PAAEAEPAVSEA) are compositionally biased toward low complexity.

It belongs to the FKBP-type PPIase family. Tig subfamily.

It localises to the cytoplasm. The catalysed reaction is [protein]-peptidylproline (omega=180) = [protein]-peptidylproline (omega=0). Functionally, involved in protein export. Acts as a chaperone by maintaining the newly synthesized protein in an open conformation. Functions as a peptidyl-prolyl cis-trans isomerase. This chain is Trigger factor, found in Acidothermus cellulolyticus (strain ATCC 43068 / DSM 8971 / 11B).